The following is a 384-amino-acid chain: Gibberellin 3-beta-dioxygenase 1 (384 aa).

A Fe2OG dioxygenase domain is found at 225-327; sequence TLTSTIHLNM…RISMPYFLGP (103 aa). Fe cation contacts are provided by H250, D252, and H308. 2-oxoglutarate is bound by residues R318 and S320.

It belongs to the iron/ascorbate-dependent oxidoreductase family. It depends on L-ascorbate as a cofactor. Fe(2+) serves as cofactor. As to expression, expressed in unopened flowers.

The enzyme catalyses gibberellin A20 + 2-oxoglutarate + O2 = gibberellin A1 + succinate + CO2. It participates in plant hormone biosynthesis; gibberellin biosynthesis. In terms of biological role, catalyzes the 3-beta-hydroxylation of the inactive gibberellin precursors, leading to the formation of bioactive gibberellins. In vitro, converts the precursors GA20, GA5, GA44 and GA9 to the corresponding 3-beta-hydroxylated bioactive products GA1, GA3, GA38 and GA4, respectively. Involved in the production of bioactive GA for vegetative growth and development. May possess 2,3-desaturase activity, catalyzing the conversion of GA9 to 2,3-dehydro-GA9, and GA20 to GA5 (2,3-dehydro GA20). May possess 2-beta-hydroxylase activity, catalyzing the conversion of GA1 and GA4 to the corresponding 2-beta-hydroxylated products GA8 and GA34, respectively. In Oryza sativa subsp. japonica (Rice), this protein is Gibberellin 3-beta-dioxygenase 1.